We begin with the raw amino-acid sequence, 645 residues long: Aspartate--tRNA ligase, mitochondrial (645 aa).

A mitochondrion-targeting transit peptide spans 1-47 (MYFPSWLSQLYRGLSRPIRRTTQPIWGSLYRSLLQSSQRRIPEFSSF). Residue T219 is modified to Phosphothreonine. S242 carries the phosphoserine modification. The aspartate stretch occupies residues 244 to 247 (QQFK). Residue R266 participates in L-aspartate binding. ATP is bound at residue 266-268 (RDE). K382 is modified (N6-acetyllysine). Residue E535 participates in ATP binding. L-aspartate is bound at residue R542. 584-587 (GLDR) lines the ATP pocket.

The protein belongs to the class-II aminoacyl-tRNA synthetase family. Type 1 subfamily. As to quaternary structure, homodimer.

Its subcellular location is the mitochondrion matrix. It localises to the mitochondrion membrane. The catalysed reaction is tRNA(Asp) + L-aspartate + ATP = L-aspartyl-tRNA(Asp) + AMP + diphosphate. In terms of biological role, catalyzes the attachment of aspartate to tRNA(Asp) in a two-step reaction: aspartate is first activated by ATP to form Asp-AMP and then transferred to the acceptor end of tRNA(Asp). The polypeptide is Aspartate--tRNA ligase, mitochondrial (DARS2) (Homo sapiens (Human)).